An 89-amino-acid polypeptide reads, in one-letter code: Large ribosomal subunit protein eL34 (89 aa).

It belongs to the eukaryotic ribosomal protein eL34 family.

This Methanocaldococcus jannaschii (strain ATCC 43067 / DSM 2661 / JAL-1 / JCM 10045 / NBRC 100440) (Methanococcus jannaschii) protein is Large ribosomal subunit protein eL34 (rpl34e).